We begin with the raw amino-acid sequence, 437 residues long: GTPase Der (437 aa).

2 consecutive EngA-type G domains span residues 3 to 168 (PLIA…PESE) and 178 to 353 (VKLA…RNRS). GTP is bound by residues 9 to 16 (GRPNVGKS), 56 to 60 (DTGGY), 120 to 123 (NKVE), 184 to 191 (GRPNVGKS), 231 to 235 (DTAGL), and 296 to 299 (NKWD). Residues 354–437 (RKISTSSLNR…VPISLRFMEK (84 aa)) form the KH-like domain.

This sequence belongs to the TRAFAC class TrmE-Era-EngA-EngB-Septin-like GTPase superfamily. EngA (Der) GTPase family. Associates with the 50S ribosomal subunit.

Its function is as follows. GTPase that plays an essential role in the late steps of ribosome biogenesis. The polypeptide is GTPase Der (Chlorobium limicola (strain DSM 245 / NBRC 103803 / 6330)).